Consider the following 203-residue polypeptide: N-(5'-phosphoribosyl)anthranilate isomerase (203 aa).

The protein belongs to the TrpF family.

The enzyme catalyses N-(5-phospho-beta-D-ribosyl)anthranilate = 1-(2-carboxyphenylamino)-1-deoxy-D-ribulose 5-phosphate. Its pathway is amino-acid biosynthesis; L-tryptophan biosynthesis; L-tryptophan from chorismate: step 3/5. This chain is N-(5'-phosphoribosyl)anthranilate isomerase, found in Listeria innocua serovar 6a (strain ATCC BAA-680 / CLIP 11262).